Consider the following 595-residue polypeptide: P2X purinoceptor 7 (595 aa).

Topologically, residues 1–22 are cytoplasmic; that stretch reads MPACCSWNDVLQYETNKVTRIQ. Residue Cys-4 is the site of S-palmitoyl cysteine attachment. A helical membrane pass occupies residues 23–46; the sequence is STNYGTVKWVLHMIVFSYISFALV. Residues 47-328 are Extracellular-facing; the sequence is SDKLYQRKEP…ILVFGTGGKF (282 aa). Residue Asn-74 is glycosylated (N-linked (GlcNAc...) asparagine). Disulfide bonds link Cys-119–Cys-168, Cys-129–Cys-152, and Cys-135–Cys-162. Residues Arg-125 and Arg-133 each carry the ADP-ribosylarginine; by ART2B modification. Asn-187 carries an N-linked (GlcNAc...) asparagine glycan. Thr-189 contributes to the ATP binding site. N-linked (GlcNAc...) asparagine glycosylation is found at Asn-202 and Asn-213. Cys-216 and Cys-226 are disulfide-bonded. An N-linked (GlcNAc...) asparagine glycan is attached at Asn-241. A disulfide bridge connects residues Cys-260 and Cys-269. The ATP site is built by Arg-294 and Lys-311. A helical transmembrane segment spans residues 329–353; sequence DIIQLVVYIGSTLSYFGLATVCIDL. Residue Ser-342 coordinates Na(+). Residues 354–595 lie on the Cytoplasmic side of the membrane; it reads LINTYSSAFC…GQYSGFKYPY (242 aa). The interval 360–377 is C-cys anchor; it reads SAFCRSGVYPYCKCCEPC. S-palmitoyl cysteine attachment occurs at residues Cys-363, Cys-374, and Cys-377. At Ser-390 the chain carries Phosphoserine. The tract at residues 395–595 is cytoplasmic ballast; it reads KPTLKYVSFV…GQYSGFKYPY (201 aa). 3 residues coordinate Zn(2+): Cys-479, Cys-499, and Cys-506. Arg-546, His-547, Tyr-550, and Ala-567 together coordinate GTP. Cys-572 is a binding site for Zn(2+). Lys-583, Ser-589, and Gly-590 together coordinate GTP.

The protein belongs to the P2X receptor family. Homotrimers. Interacts with LAMA3, ITGB2, ACTB, ACTN4, SVIL, MPP3, HSPA1, HSPCB, HSPA8, PIK230 and PTPRB. Interacts (via C-terminus) with EMP2. In terms of processing, phosphorylation results in its inactivation. ADP-ribosylation at Arg-125 is necessary and sufficient to activate P2RX7 and gate the channel. Post-translationally, palmitoylation of several cysteines in the C-terminal cytoplasmic tail is required for efficient localization to cell surface. Palmitoylation prevents channel desensitization by physically anchoring the palmitoylated groups to the membrane.

The protein localises to the cell membrane. It catalyses the reaction Ca(2+)(in) = Ca(2+)(out). The catalysed reaction is K(+)(in) = K(+)(out). The enzyme catalyses Na(+)(in) = Na(+)(out). Its activity is regulated as follows. Activated by high extracellular ATP levels (0.1-2.5 mM). The synthetic analog 2'(3')-O-(4-benzoylbenzoyl)ATP (BzATP) acts as a potent agonist. Does not undergo desensitization, instead, undergoes a facilitation process where currents progressively increase with repetitive or prolonged agonist application. Palmitoylation prevents channel desensitization. The permeability of the P2RX7 channel is modulated by the amount of cholesterol in the plasma membrane. ATP-gated nonselective transmembrane cation channel. Requires high millimolar-range concentrations of ATP to become activated. ATP binding trigers the rapid opening of the channel and allows Na(+) and Ca(2+) influx and K(+) efflux. Has also the ability to form a large pore in the cell membrane, allowing the passage of large cationic molecules. In microglia, may mediate NADPH transport across the plasma membrane. In immune cells, P2RX7 acts as a molecular sensor in pathological inflammatory states by detecting and responding to high local concentrations of extracellar ATP. In microglial cells, P2RX7 activation leads to the release of pro-inflammatory cytokines, such as IL-1beta and IL-18, through the activation of the NLRP3 inflammasome and caspase-1. Cooperates with KCNK6 to activate NLRP3 inflammasome. Activates death pathways leading to apoptosis and autophagy. Activates death pathways leading to pyroptosis. This is P2X purinoceptor 7 (P2rx7) from Mus musculus (Mouse).